Reading from the N-terminus, the 582-residue chain is Leucine-rich repeat protein SHOC-2 (582 aa).

Composition is skewed to basic and acidic residues over residues 1–29 (MSSS…KEAK) and 36–57 (KESK…KKDS). Residues 1-88 (MSSSLGKEKD…PGTRKKSSNA (88 aa)) form a disordered region. The short motif at 63–66 (GVAF) is the RVxF motif; important for interaction with PP1c element. 20 LRR repeats span residues 101–122 (NSMR…IKEL), 124–145 (QLTE…VGCL), 147–169 (NLMT…DNLK), 170–191 (KLRM…VYRL), 193–214 (SLTT…IKNL), 216–237 (KLSM…IGEL), 239–260 (NLIT…IGNC), 262–283 (QITN…IGNL), 285–307 (SLSR…AKCS), 308–329 (ALEE…LLSS), 332–353 (KLNS…GPSQ), 356–377 (TIYS…IFSR), 380–400 (VLSK…DFGT), 403–424 (SMVE…VSGL), 426–448 (SLEV…GNLR), 449–470 (KLRE…IAYL), 472–494 (DLQK…GHLT), 495–516 (NLTH…IGTL), 518–540 (NLEE…LALC), and 542–563 (KLSI…IVAG).

It belongs to the SHOC2 family. As to quaternary structure, component of the SHOC2-MRAS-PP1c (SMP) complex consisting of SHOC2, GTP-bound M-Ras/MRAS and the catalytic subunit of protein phosphatase 1 (either PPP1CA, PPP1CB or PPP1CC). SHOC2 and PP1c preferably bind M-Ras/MRAS, but they also bind K-Ras/KRAS, N-Ras/NRAS and H-Ras/HRAS; these interactions are GTP-dependent and both SHOC2 and PP1c are required to form a stable complex. Interacts with PP1c in the absence of Ras GTPases. Interacts with M-Ras/MRAS and RAF1. Interacts with ERBIN; disrupts the interaction with RAF1 and Ras, preventing the activation of the Ras signaling pathway. Interacts with LZTR1.

The protein resides in the cytoplasm. It localises to the nucleus. Its function is as follows. Core component of the SHOC2-MRAS-PP1c (SMP) holophosphatase complex that regulates activation of the MAPK pathway. Acts as a scaffolding protein in the SMP complex. The SMP complex specifically dephosphorylates the inhibitory phosphorylation at 'Ser-259' of RAF1 kinase, 'Ser-365' of BRAF kinase and 'Ser-214' of ARAF kinase, stimulating their kinase activities. The SMP complex enhances the dephosphorylation activity and substrate specificity of PP1c. In Homo sapiens (Human), this protein is Leucine-rich repeat protein SHOC-2 (SHOC2).